We begin with the raw amino-acid sequence, 570 residues long: Sulfite reductase [NADPH] hemoprotein beta-component (570 aa).

Cysteine 434, cysteine 440, cysteine 479, and cysteine 483 together coordinate [4Fe-4S] cluster. Cysteine 483 contributes to the siroheme binding site.

This sequence belongs to the nitrite and sulfite reductase 4Fe-4S domain family. In terms of assembly, alpha(8)-beta(8). The alpha component is a flavoprotein, the beta component is a hemoprotein. Siroheme is required as a cofactor. [4Fe-4S] cluster serves as cofactor.

The enzyme catalyses hydrogen sulfide + 3 NADP(+) + 3 H2O = sulfite + 3 NADPH + 4 H(+). The protein operates within sulfur metabolism; hydrogen sulfide biosynthesis; hydrogen sulfide from sulfite (NADPH route): step 1/1. Functionally, component of the sulfite reductase complex that catalyzes the 6-electron reduction of sulfite to sulfide. This is one of several activities required for the biosynthesis of L-cysteine from sulfate. This is Sulfite reductase [NADPH] hemoprotein beta-component from Klebsiella pneumoniae subsp. pneumoniae (strain ATCC 700721 / MGH 78578).